Consider the following 404-residue polypeptide: L-cysteine:1D-myo-inositol 2-amino-2-deoxy-alpha-D-glucopyranoside ligase 1 (404 aa).

Cys47 is a binding site for Zn(2+). Residues 47–50 (CGIT), Thr62, and 85–87 (NIT) contribute to the L-cysteinyl-5'-AMP site. Residues 49–59 (ITPYDSTHLGH) carry the 'HIGH' region motif. The 'ERGGDP' region signature appears at 188-193 (ERGGDP). L-cysteinyl-5'-AMP is bound at residue Trp228. Cys232 serves as a coordination point for Zn(2+). 250–252 (GSD) contributes to the L-cysteinyl-5'-AMP binding site. His257 provides a ligand contact to Zn(2+). Ile284 contacts L-cysteinyl-5'-AMP. The 'KMSKS' region signature appears at 290–294 (KMSKS).

This sequence belongs to the class-I aminoacyl-tRNA synthetase family. MshC subfamily. Monomer. Zn(2+) serves as cofactor.

It catalyses the reaction 1D-myo-inositol 2-amino-2-deoxy-alpha-D-glucopyranoside + L-cysteine + ATP = 1D-myo-inositol 2-(L-cysteinylamino)-2-deoxy-alpha-D-glucopyranoside + AMP + diphosphate + H(+). In terms of biological role, catalyzes the ATP-dependent condensation of GlcN-Ins and L-cysteine to form L-Cys-GlcN-Ins. The protein is L-cysteine:1D-myo-inositol 2-amino-2-deoxy-alpha-D-glucopyranoside ligase 1 of Corynebacterium urealyticum (strain ATCC 43042 / DSM 7109).